The chain runs to 834 residues: Protein translocase subunit SecA (834 aa).

Residues Gln85, 103 to 107, and Asp491 each bind ATP; that span reads GEGKT. The tract at residues 790 to 809 is disordered; the sequence is RETSTNINDGEGGSHEPIKR. 4 residues coordinate Zn(2+): Cys820, Cys822, Cys831, and Cys832.

The protein belongs to the SecA family. Monomer and homodimer. Part of the essential Sec protein translocation apparatus which comprises SecA, SecYEG and auxiliary proteins SecDF. Other proteins may also be involved. Zn(2+) serves as cofactor.

Its subcellular location is the cell membrane. The protein resides in the cytoplasm. The enzyme catalyses ATP + H2O + cellular proteinSide 1 = ADP + phosphate + cellular proteinSide 2.. Functionally, part of the Sec protein translocase complex. Interacts with the SecYEG preprotein conducting channel. Has a central role in coupling the hydrolysis of ATP to the transfer of proteins into and across the cell membrane, serving as an ATP-driven molecular motor driving the stepwise translocation of polypeptide chains across the membrane. The sequence is that of Protein translocase subunit SecA from Clostridium novyi (strain NT).